Reading from the N-terminus, the 528-residue chain is Catalase (528 aa).

A compositionally biased stretch (basic and acidic residues) spans 1–22 (MADRREKSADQMKLWKESRANQ). The tract at residues 1–32 (MADRREKSADQMKLWKESRANQKPDVLTTGGG) is disordered. Residues H75 and N148 contribute to the active site. NADP(+)-binding residues include H194, S201, R203, N213, K237, W303, H305, and K306. Residue Y358 coordinates heme. Positions 525 to 528 (KANL) match the Microbody targeting signal; atypical motif.

This sequence belongs to the catalase family. As to quaternary structure, homotetramer. Requires heme as cofactor. NADP(+) serves as cofactor.

Its subcellular location is the peroxisome matrix. It catalyses the reaction 2 H2O2 = O2 + 2 H2O. In terms of biological role, catalyzes the degradation of hydrogen peroxide (H(2)O(2)) generated by peroxisomal oxidases to water and oxygen, thereby protecting cells from the toxic effects of hydrogen peroxide. This Glandirana rugosa (Japanese wrinkled frog) protein is Catalase (cat).